The following is a 5098-amino-acid chain: Auxin transport protein BIG (5098 aa).

The residue at position 2 (Ala-2) is an N-acetylalanine. A run of 2 helical transmembrane segments spans residues 1150–1170 and 1458–1478; these read AILL…NGLL and LAAE…IGTL. Residues 1539 to 1549 show a composition bias toward acidic residues; sequence SVDEDEDDGTS. The interval 1539 to 1562 is disordered; sequence SVDEDEDDGTSDGEVASLDKEDEE. The UBR-type zinc finger occupies 1573–1644; that stretch reads KVCTFTSSGS…RGSSCQCLKP (72 aa). Residues 2613–2672 form a ZZ-type zinc finger; sequence SVQYCCDGCSTVPILRRRWHCTVCPDFDLCEACYEVLDADRLPPPHTRDHPMTAIPIEVE. 8 residues coordinate Zn(2+): Cys-2618, Cys-2621, Cys-2633, Cys-2636, Cys-2642, Cys-2645, His-2658, and His-2662. The helical transmembrane segment at 2813–2833 threads the bilayer; that stretch reads SSLGEIVILVFMFFTLMLRSW. The segment at 3149-3174 is disordered; the sequence is EVVTGSNRSGSQSVDSKKKKKGEDGH. A compositionally biased stretch (polar residues) spans 3151 to 3162; the sequence is VTGSNRSGSQSV. The segment at 3464-3504 adopts an MYND-type; degenerate zinc-finger fold; that stretch reads CPRCSRPVTDKHGICSNCHENAYQCRQCRNINYENLDSFLC. Coiled-coil stretches lie at residues 3537–3557 and 4313–4333; these read KKGL…YQQL and LEIL…NQEE. Residues 4569 to 5098 are UBR4 E3 catalytic module; sequence PSVPLILSML…QFVRSAIDKD (530 aa). The segment at 4698 to 4817 adopts a HemiRING-type zinc-finger fold; it reads GLACMVCREG…WDNLNALGRA (120 aa). Zn(2+) contacts are provided by Cys-4701, Cys-4704, His-4751, and Cys-4754. Positions 4820 to 5098 constitute a UZI domain; that stretch reads SRLRLLTYDI…QFVRSAIDKD (279 aa). A compositionally biased stretch (low complexity) spans 4891–4903; it reads SSTSTATAPSSDS. A disordered region spans residues 4891 to 4915; it reads SSTSTATAPSSDSRPLTPGSQLSST.

Belongs to the UBR4 family. As to expression, constitutively expressed in roots, rosette leaves, inflorescence stems, and flowers. Present in inflorescence meristems, floral meristems and vascular tissues.

Its subcellular location is the membrane. Required for auxin efflux and polar auxin transport (PAT) influencing auxin-mediated developmental responses (e.g. cell elongation, apical dominance, lateral root production, inflorescence architecture, general growth and development). Controls the elongation of the pedicels and stem internodes through auxin action. Involved in the expression modulation of light-regulated genes. Represses CAB1 and CAB3 genes expression in etiolated seedlings. Confers sensitivity to the auxin transport inhibitors N-1-naphthylphthalamic acid (NPA), 2-carboxyphenyl-3-phenylpropane-l,2-dione (CPD), and methyl-2-chloro-9-hydroxyfluorene-9-carboxylate (CFM). Influences the polarized subcellular distribution of the auxin transporter PIN1 in response to auxin transport inhibitors. Plays a role in the regulation of responses to phytohormones such as auxin, cytokinins, ethylene and gibberellic acid (GA), particularly during light-mediated stimuli (e.g. shade ovoidance, etiolation). Required for pericycle cell activation to form lateral root primordia (LRP) in both high and low phosphate P conditions. Necessary for the plant-growth promotion and lateral root development mediated by the fungus Trichoderma virens. The sequence is that of Auxin transport protein BIG (BIG) from Arabidopsis thaliana (Mouse-ear cress).